Consider the following 123-residue polypeptide: Large ribosomal subunit protein eL8 (123 aa).

This sequence belongs to the eukaryotic ribosomal protein eL8 family. As to quaternary structure, part of the 50S ribosomal subunit. Probably part of the RNase P complex.

It localises to the cytoplasm. Multifunctional RNA-binding protein that recognizes the K-turn motif in ribosomal RNA, the RNA component of RNase P, box H/ACA, box C/D and box C'/D' sRNAs. The sequence is that of Large ribosomal subunit protein eL8 from Methanothermobacter thermautotrophicus (strain ATCC 29096 / DSM 1053 / JCM 10044 / NBRC 100330 / Delta H) (Methanobacterium thermoautotrophicum).